Here is a 1485-residue protein sequence, read N- to C-terminus: Putative E3 ubiquitin-protein ligase LIN-2 (1485 aa).

Residues 337–353 (EENEDDSDSELDNESVD) show a composition bias toward acidic residues. Disordered regions lie at residues 337 to 363 (EENE…IFSP), 384 to 450 (NQIP…ISNA), and 462 to 507 (RKND…KLSM). The span at 438–450 (SSPDISIDNISNA) shows a compositional bias: low complexity. Over residues 466–484 (SQTPSMNQDNENSLVLNDS) the composition is skewed to polar residues. In terms of domain architecture, U-box spans 510–585 (KPPKDFVCPI…TSWKEQNPEL (76 aa)). 4 WD repeats span residues 1194 to 1232 (SCKE…KVCD), 1246 to 1283 (EHTK…IKCI), 1409 to 1448 (SLST…RVAS), and 1454 to 1485 (GHTK…WALD).

It catalyses the reaction S-ubiquitinyl-[E2 ubiquitin-conjugating enzyme]-L-cysteine + [acceptor protein]-L-lysine = [E2 ubiquitin-conjugating enzyme]-L-cysteine + N(6)-ubiquitinyl-[acceptor protein]-L-lysine.. Its pathway is protein modification; protein ubiquitination. Putative E3 ubiquitin-protein ligase involved in the rhizobial infection process. Plays an important role in the early steps of infection thread formation and in growth and differentiation of nodules. This Lotus japonicus (Lotus corniculatus var. japonicus) protein is Putative E3 ubiquitin-protein ligase LIN-2.